The chain runs to 309 residues: Putative ankyrin repeat protein R603 (309 aa).

7 ANK repeats span residues 53–82, 83–112, 114–144, 145–176, 177–206, 214–243, and 245–274; these read QVNGYFTYCVQKNKLDAIQYLYENNLMNPE, NKSQLFKIAIVHGNIDVLKLVIDYGIDVSL, DHFAITVCTRPISNTENIIQLLIDNGADVTS, NNNLPIKFAILKGTINKSVLDLLINNGADIHA, DEYFCAKYAAKCCYIFALKYIINLGIDVNM, NVLSDTAYSSNEYTYSCIKTLLENGADISF, and DDNDTLKMCRGSKTRNILILLLDYGFDISF.

This is Putative ankyrin repeat protein R603 from Acanthamoeba polyphaga (Amoeba).